We begin with the raw amino-acid sequence, 193 residues long: Potassium-transporting ATPase KdpC subunit (193 aa).

A helical transmembrane segment spans residues Val9–Gly29.

It belongs to the KdpC family. In terms of assembly, the system is composed of three essential subunits: KdpA, KdpB and KdpC.

Its subcellular location is the cell inner membrane. Functionally, part of the high-affinity ATP-driven potassium transport (or Kdp) system, which catalyzes the hydrolysis of ATP coupled with the electrogenic transport of potassium into the cytoplasm. This subunit acts as a catalytic chaperone that increases the ATP-binding affinity of the ATP-hydrolyzing subunit KdpB by the formation of a transient KdpB/KdpC/ATP ternary complex. The polypeptide is Potassium-transporting ATPase KdpC subunit (Koribacter versatilis (strain Ellin345)).